The primary structure comprises 385 residues: Serpin-Z1 (385 aa).

The tract at residues 317 to 341 (GAEAAAATADGDCGCSLDFVEPPKK) is RCL.

The protein belongs to the serpin family.

Functionally, probable serine protease inhibitor. The protein is Serpin-Z1 of Arabidopsis thaliana (Mouse-ear cress).